The chain runs to 1190 residues: DNA-directed RNA polymerase subunit beta (1190 aa).

This sequence belongs to the RNA polymerase beta chain family. The RNAP catalytic core consists of 2 alpha, 1 beta, 1 beta' and 1 omega subunit. When a sigma factor is associated with the core the holoenzyme is formed, which can initiate transcription.

It catalyses the reaction RNA(n) + a ribonucleoside 5'-triphosphate = RNA(n+1) + diphosphate. Its function is as follows. DNA-dependent RNA polymerase catalyzes the transcription of DNA into RNA using the four ribonucleoside triphosphates as substrates. The protein is DNA-directed RNA polymerase subunit beta of Geobacillus thermodenitrificans (strain NG80-2).